The chain runs to 626 residues: MSKKGRSKGEKPETETDSVQMANEELRAKLTNIQIEFQQEKSKVGKLRERLQEAKLEREQEQRRHTAYISELKAKLHEEKTKELQALREALIRQHEQEAARTAKIKEGELQRLQATLNVLRDGAADKVKTALLADAREEARRTFDGERQRLQQEILELKAARKQAEEALSNCMQADKAKAADLRAAYQAHQDEVHRIKRECERDIRRLMDEIKGKERVILALEKELGVQAGQTQRLLLQKEALDEQLVQVKEAERHHSSPKRELPPGIGDMAELMGGQDQHMDERDVRRFQLKIAELNSVIRKLEDRNTLLADERNELLKRSRETEVQLKPLVEKNKRMNKKNEDLLHSIQRMEEKLKSLTRENVEMKEKLSAQASLKRHTSLNDLSLTRDEQEIEFLRLQVLEQQHVIDDLSLERERLLRSKRHRGKSLKPPKKHVVETFFGFDEESVDSETLSETSYNTDRTDRTPATPEEDLDETTTREEADLRFCQLTREYQALQRAYALLQEQVGGTLDAEREARTREQLQADLLRCQAKIEDLEKLLVEKGQDAAWVEEKQVLMRTNQDLLEKIYRLEMEENQLKSEMQDAKDQNELLEFRVLELEVRDSICCKLSNGADILFEPKLKFV.

Residues 1 to 25 (MSKKGRSKGEKPETETDSVQMANEE) are disordered. Residues 1–365 (MSKKGRSKGE…KLKSLTRENV (365 aa)) form a mediates association with microtubules region. Coiled-coil stretches lie at residues 13–255 (ETET…EAER) and 284–413 (ERDV…DDLS). Residues 365–626 (VEMKEKLSAQ…ILFEPKLKFV (262 aa)) form a mediates interaction with TYK2 and GABBR1 region. Serine 382 is modified (phosphoserine). The span at 452 to 461 (ETLSETSYNT) shows a compositional bias: polar residues. The interval 452–481 (ETLSETSYNTDRTDRTPATPEEDLDETTTR) is disordered. Position 470 is a phosphothreonine (threonine 470). The stretch at 490–604 (QLTREYQALQ…EFRVLELEVR (115 aa)) forms a coiled coil.

Belongs to the JAKMIP family. In terms of assembly, homodimer. Interacts with JAK1 and TYK2. Forms a complex with GABBR1 and KIF5B/kinesin-1. Post-translationally, phosphorylated. As to expression, specifically expressed in brain and testis by spermatogonia, spermatocytes, spermatozoa and Sertoli cells (at protein level).

The protein resides in the cytoplasm. Its subcellular location is the cytoskeleton. It is found in the membrane. Its function is as follows. Associates with microtubules and may play a role in the microtubule-dependent transport of the GABA-B receptor. May play a role in JAK1 signaling and regulate microtubule cytoskeleton rearrangements. In Rattus norvegicus (Rat), this protein is Janus kinase and microtubule-interacting protein 1 (Jakmip1).